We begin with the raw amino-acid sequence, 618 residues long: Chaperone protein HscA homolog (618 aa).

The protein belongs to the heat shock protein 70 family.

Functionally, chaperone involved in the maturation of iron-sulfur cluster-containing proteins. Has a low intrinsic ATPase activity which is markedly stimulated by HscB. This Variovorax paradoxus (strain S110) protein is Chaperone protein HscA homolog.